Consider the following 682-residue polypeptide: Probable methyltransferase PMT12 (682 aa).

Residues 1–11 are Cytoplasmic-facing; that stretch reads MKLFLNSNLLR. Residues 12 to 32 form a helical; Signal-anchor for type II membrane protein membrane-spanning segment; the sequence is NSIFFKISAFVLISVACFFLG. The Lumenal segment spans residues 33-682; that stretch reads KHWSEDGFRR…KRRKTKGKRA (650 aa). N-linked (GlcNAc...) asparagine glycans are attached at residues asparagine 67, asparagine 103, asparagine 125, asparagine 155, asparagine 173, asparagine 193, asparagine 273, asparagine 350, asparagine 395, asparagine 419, asparagine 600, and asparagine 625.

It belongs to the methyltransferase superfamily.

It is found in the golgi apparatus membrane. This Arabidopsis thaliana (Mouse-ear cress) protein is Probable methyltransferase PMT12.